The sequence spans 196 residues: MLIGLTGTPGTGKTSVSKLLEKRRGWKVVYLNDLIKEEHLYSEVDEERDSVIADMELIRERLSGILEEEKGQHAEKAKVNGEEKENITIIESHLAHYITDIVIVLRAYPPELKKRLEKRGYSEEKINENAEAESIDLILAEAFEWCKKVFEVNTTGRTAEETLGDVEKIIDYILAGKENELQEYIPGSLDWIDSVP.

ATP is bound by residues Gly-10, Gly-12, Lys-13, Thr-14, and Ser-15. The segment at 30 to 53 (YLNDLIKEEHLYSEVDEERDSVIA) is NMP. Positions 118–128 (KRGYSEEKINE) are LID. Arg-119 is a binding site for ATP.

It belongs to the adenylate kinase family. AK6 subfamily. As to quaternary structure, interacts with uS11. Not a structural component of 40S pre-ribosomes, but transiently interacts with them by binding to uS11.

The catalysed reaction is AMP + ATP = 2 ADP. It carries out the reaction ATP + H2O = ADP + phosphate + H(+). Broad-specificity nucleoside monophosphate (NMP) kinase that catalyzes the reversible transfer of the terminal phosphate group between nucleoside triphosphates and monophosphates. Also has ATPase activity. Involved in the late maturation steps of the 30S ribosomal particles, specifically 16S rRNA maturation. While NMP activity is not required for ribosome maturation, ATPase activity is. Associates transiently with small ribosomal subunit protein uS11. ATP hydrolysis breaks the interaction with uS11. May temporarily remove uS11 from the ribosome to enable a conformational change of the ribosomal RNA that is needed for the final maturation step of the small ribosomal subunit. This chain is Putative adenylate kinase, found in Methanosarcina mazei (strain ATCC BAA-159 / DSM 3647 / Goe1 / Go1 / JCM 11833 / OCM 88) (Methanosarcina frisia).